The following is a 277-amino-acid chain: 4-hydroxy-3-methylbut-2-enyl diphosphate reductase (277 aa).

Cys-12 lines the [4Fe-4S] cluster pocket. Residues His-36 and His-70 each contribute to the (2E)-4-hydroxy-3-methylbut-2-enyl diphosphate site. His-36 and His-70 together coordinate dimethylallyl diphosphate. Residues His-36 and His-70 each contribute to the isopentenyl diphosphate site. Cys-92 provides a ligand contact to [4Fe-4S] cluster. A (2E)-4-hydroxy-3-methylbut-2-enyl diphosphate-binding site is contributed by His-120. His-120 is a dimethylallyl diphosphate binding site. His-120 is a binding site for isopentenyl diphosphate. The active-site Proton donor is Glu-122. Thr-160 serves as a coordination point for (2E)-4-hydroxy-3-methylbut-2-enyl diphosphate. A [4Fe-4S] cluster-binding site is contributed by Cys-188. Residues Ser-216, Ser-217, Asn-218, and Ser-260 each contribute to the (2E)-4-hydroxy-3-methylbut-2-enyl diphosphate site. Ser-216, Ser-217, Asn-218, and Ser-260 together coordinate dimethylallyl diphosphate. Residues Ser-216, Ser-217, Asn-218, and Ser-260 each contribute to the isopentenyl diphosphate site.

This sequence belongs to the IspH family. Requires [4Fe-4S] cluster as cofactor.

It carries out the reaction isopentenyl diphosphate + 2 oxidized [2Fe-2S]-[ferredoxin] + H2O = (2E)-4-hydroxy-3-methylbut-2-enyl diphosphate + 2 reduced [2Fe-2S]-[ferredoxin] + 2 H(+). It catalyses the reaction dimethylallyl diphosphate + 2 oxidized [2Fe-2S]-[ferredoxin] + H2O = (2E)-4-hydroxy-3-methylbut-2-enyl diphosphate + 2 reduced [2Fe-2S]-[ferredoxin] + 2 H(+). It participates in isoprenoid biosynthesis; dimethylallyl diphosphate biosynthesis; dimethylallyl diphosphate from (2E)-4-hydroxy-3-methylbutenyl diphosphate: step 1/1. The protein operates within isoprenoid biosynthesis; isopentenyl diphosphate biosynthesis via DXP pathway; isopentenyl diphosphate from 1-deoxy-D-xylulose 5-phosphate: step 6/6. In terms of biological role, catalyzes the conversion of 1-hydroxy-2-methyl-2-(E)-butenyl 4-diphosphate (HMBPP) into a mixture of isopentenyl diphosphate (IPP) and dimethylallyl diphosphate (DMAPP). Acts in the terminal step of the DOXP/MEP pathway for isoprenoid precursor biosynthesis. The protein is 4-hydroxy-3-methylbut-2-enyl diphosphate reductase of Sulfurovum sp. (strain NBC37-1).